Here is a 502-residue protein sequence, read N- to C-terminus: Cytochrome P450 71B20 (502 aa).

Residues 1-21 (MAISFLCFCLITLASLIFFAK) traverse the membrane as a helical segment. Heme is bound at residue Cys-444.

It belongs to the cytochrome P450 family. Heme serves as cofactor.

It localises to the membrane. The chain is Cytochrome P450 71B20 (CYP71B20) from Arabidopsis thaliana (Mouse-ear cress).